The sequence spans 155 residues: Cytochrome P450 (155 aa).

C99 is a heme binding site.

This sequence belongs to the cytochrome P450 family. Heme serves as cofactor.

This is Cytochrome P450 from Helianthus annuus (Common sunflower).